We begin with the raw amino-acid sequence, 954 residues long: SWI/SNF-related matrix-associated actin-dependent regulator of chromatin subfamily A-like protein 1 (954 aa).

2 disordered regions span residues 1 to 20 (MSLP…RQKA) and 27 to 238 (KLLA…NSQK). S2 is modified (N-acetylserine). Positions 3–34 (LPLTEEQRKKIEENRQKALARRAEKLLAEQHQ) form a coiled coil. Residues 5 to 30 (LTEEQRKKIEENRQKALARRAEKLLA) form a mediates interaction with RPA2 region. Over residues 7-20 (EEQRKKIEENRQKA) the composition is skewed to basic and acidic residues. A compositionally biased stretch (polar residues) spans 72 to 83 (KQQNLSSSSNAD). S112, S123, S129, and S151 each carry phosphoserine. Composition is skewed to polar residues over residues 171–183 (KSSQ…SSGQ) and 197–238 (ASPS…NSQK). S198 carries the phosphoserine modification. 2 consecutive HARP domains span residues 226–303 (SGSS…QPLE) and 327–398 (SLSF…DPLP). The 156-residue stretch at 445 to 600 (NFAIAKGGRL…YTQIIAVKPT (156 aa)) folds into the Helicase ATP-binding domain. 458–465 (DDMGLGKT) contributes to the ATP binding site. A DESH box motif is present at residues 549-552 (DESH). Positions 644–661 (RRLKSDVLSQLPAKQRKI) match the Nuclear localization signal motif. Residues 716 to 869 (YILDLLESGR…ETNFSEMTES (154 aa)) enclose the Helicase C-terminal domain. Residues 904–934 (ESFDPGSASGTSGSSSQNMGDTLDESSLTAS) form a disordered region. Low complexity predominate over residues 909 to 919 (GSASGTSGSSS). The segment covering 920 to 934 (QNMGDTLDESSLTAS) has biased composition (polar residues).

Belongs to the SNF2/RAD54 helicase family. SMARCAL1 subfamily. As to quaternary structure, interacts with RPA2; the interaction is direct and mediates the recruitment by the RPA complex of SMARCAL1 to sites of DNA damage. DNA damage-regulated phosphorylation by kinases that may include ATM, ATR and PRKDC. In terms of tissue distribution, ubiquitously expressed, with high levels in testis.

The protein resides in the nucleus. The enzyme catalyses ATP + H2O = ADP + phosphate + H(+). Its function is as follows. ATP-dependent annealing helicase that binds selectively to fork DNA relative to ssDNA or dsDNA and catalyzes the rewinding of the stably unwound DNA. Rewinds single-stranded DNA bubbles that are stably bound by replication protein A (RPA). Acts throughout the genome to reanneal stably unwound DNA, performing the opposite reaction of many enzymes, such as helicases and polymerases, that unwind DNA. May play an important role in DNA damage response by acting at stalled replication forks. This is SWI/SNF-related matrix-associated actin-dependent regulator of chromatin subfamily A-like protein 1 from Homo sapiens (Human).